The primary structure comprises 87 residues: Large ribosomal subunit protein bL27 (87 aa).

The disordered stretch occupies residues 1-25 (MAHKKGASSSRNGRDSNAQRLGVKR). Residues 7 to 19 (ASSSRNGRDSNAQ) show a composition bias toward polar residues.

It belongs to the bacterial ribosomal protein bL27 family.

In Rhodococcus jostii (strain RHA1), this protein is Large ribosomal subunit protein bL27.